Consider the following 404-residue polypeptide: Zinc metalloprotease Rip1 (404 aa).

The chain crosses the membrane as a helical span at residues 1-21 (MMFVTGIVLFALAILISVALH). H21 contributes to the Zn(2+) binding site. E22 is an active-site residue. Residue H25 coordinates Zn(2+). Residues 104–124 (PGMNLAICLVLIYAIALVWGL) traverse the membrane as a helical segment. The region spanning 121–203 (VWGLPNLHPP…SVPIVVERDG (83 aa)) is the PDZ domain. D202 contacts Zn(2+). 2 consecutive transmembrane segments (helical) span residues 313–333 (LWVA…AINL) and 373–393 (LLPA…LTVT).

This sequence belongs to the peptidase M50B family. Zn(2+) serves as cofactor.

Its subcellular location is the cell membrane. Functionally, a probable site-2 protease (S2P) that cleaves type-2 transmembrane proteins within their membrane-spanning domains. Degrades anti-sigma factors RskA, RslA and RsmA, releasing sigma factors SigK, SigL and SigM from the cellular membrane, activating signaling pathways. Does not act on RsdA. Regulates the composition of extractable mycolic acids in the cell envelope in response to changes in membrane fluidity. Mediates transcriptional regulation of mycolic acid biosynthetic genes in response to detergent. Probably also cleaves PbpB (PBP3, FtsI); this cleavage is inhibited by Wag31-PbpBI interaction. In terms of biological role, regulated intramembrane proteolysis (RIP) occurs when an extracytoplasmic signal (possibly oxidative stress) triggers a concerted proteolytic cascade to transmit information and elicit cellular responses. The membrane-spanning regulatory substrate protein (includes anti-sigma factors RskA, RslA, RsmA, and PbpB) is first cut extracytoplasmically (site-1 protease, S1P), then within the membrane itself (site-2 protease, S2P, this entry), while cytoplasmic proteases finish degrading the regulatory protein, liberating the effector protein (ECF sigma factors SigK, SigL and SigM). The polypeptide is Zinc metalloprotease Rip1 (rip1) (Mycobacterium tuberculosis (strain ATCC 35801 / TMC 107 / Erdman)).